The sequence spans 119 residues: UPF0102 protein GFO_3098 (119 aa).

Belongs to the UPF0102 family.

The protein is UPF0102 protein GFO_3098 of Christiangramia forsetii (strain DSM 17595 / CGMCC 1.15422 / KT0803) (Gramella forsetii).